The sequence spans 237 residues: MATKRKCPANGDDGGVADLEPVAGGSFASPPPEKKAKLTVAVAVAVAPSSSSSATTAAAGEATAKREHGGFFAFARPENNTRLSVAVASSSSSASAAAEKAMAKLTVAGVAPSSSASAAAAGKATAKREYGGFCAFARPDDKTRWRVAVASSAAAAADASYSSSSPATGEQPEANRCATCRRKVGLTGFKCRCGGTFCGGHRYADEHGCGFDYKSSGRELIAKQNPVVVADKLAFRI.

The segment at 1-31 is disordered; the sequence is MATKRKCPANGDDGGVADLEPVAGGSFASPP. The AN1-type zinc finger occupies 171–217; the sequence is QPEANRCATCRRKVGLTGFKCRCGGTFCGGHRYADEHGCGFDYKSSG. Zn(2+)-binding residues include C177, C180, C191, C193, C198, H201, H207, and C209.

In terms of biological role, may be involved in environmental stress response. The protein is Zinc finger AN1 domain-containing stress-associated protein 14 (SAP14) of Oryza sativa subsp. japonica (Rice).